The chain runs to 130 residues: Small ribosomal subunit protein uS9 (130 aa).

This sequence belongs to the universal ribosomal protein uS9 family.

The chain is Small ribosomal subunit protein uS9 from Agathobacter rectalis (strain ATCC 33656 / DSM 3377 / JCM 17463 / KCTC 5835 / VPI 0990) (Eubacterium rectale).